We begin with the raw amino-acid sequence, 304 residues long: Non-specific ribonucleoside hydrolase RihC (304 aa).

The active site involves H233.

Belongs to the IUNH family. RihC subfamily.

Functionally, hydrolyzes both purine and pyrimidine ribonucleosides with a broad-substrate specificity. This chain is Non-specific ribonucleoside hydrolase RihC, found in Shigella flexneri serotype 5b (strain 8401).